Reading from the N-terminus, the 367-residue chain is Glutamate 5-kinase (367 aa).

Lysine 8 contacts ATP. 3 residues coordinate substrate: serine 49, aspartate 136, and asparagine 148. Residues 168–169 and 210–216 contribute to the ATP site; these read TD and TGGMATK. The PUA domain occupies 275–353; that stretch reads TGKLYLDRGA…EEIPTILGYS (79 aa).

Belongs to the glutamate 5-kinase family.

The protein localises to the cytoplasm. It carries out the reaction L-glutamate + ATP = L-glutamyl 5-phosphate + ADP. Its pathway is amino-acid biosynthesis; L-proline biosynthesis; L-glutamate 5-semialdehyde from L-glutamate: step 1/2. Its function is as follows. Catalyzes the transfer of a phosphate group to glutamate to form L-glutamate 5-phosphate. In Cyanothece sp. (strain PCC 7425 / ATCC 29141), this protein is Glutamate 5-kinase.